Reading from the N-terminus, the 131-residue chain is Snaclec A8 (131 aa).

3 cysteine pairs are disulfide-bonded: Cys2-Cys13, Cys30-Cys129, and Cys104-Cys121. A C-type lectin domain is found at 9-130 (HEGHCYKVFN…CGQPYRFTCE (122 aa)).

This sequence belongs to the snaclec family. In terms of assembly, heterodimer; disulfide-linked. In terms of tissue distribution, expressed by the venom gland.

It localises to the secreted. Interferes with one step of hemostasis (modulation of platelet aggregation, or coagulation cascade, for example). The polypeptide is Snaclec A8 (Macrovipera lebetinus (Levantine viper)).